Consider the following 78-residue polypeptide: Lantibiotic cinnamycin (78 aa).

The propeptide occupies 1-59 (MTASILQQSVVDADFRAALLENPAAFGASAAALPTPVEAQDQASLDFWTKDIAATEAFA). 2 consecutive cross-links (beta-methyllanthionine (Cys-Thr)) follow at residues 60 to 77 (CRQS…DGNT) and 64 to 70 (CSFGPFT). The lanthionine (Ser-Cys) cross-link spans 63 to 73 (SCSFGPFTFVC). The lysinoalanine (Ser-Lys) cross-link spans 65–78 (SFGPFTFVCDGNTK). Asp-74 is subject to (3R)-3-hydroxyaspartate.

This sequence belongs to the type B lantibiotic family. Post-translationally, maturation of lantibiotics involves the enzymatic conversion of Thr, and Ser into dehydrated AA and the formation of thioether bonds with cysteine or the formation of dialkylamine bonds with lysine. This is followed by membrane translocation and cleavage of the modified precursor.

Can act as inhibitor of the enzyme phospholipase A2, and of the angiotensin-converting enzyme. Shows inhibitory activities against herpes simplex virus and immunopotentiating activities. Its antimicrobial activities are not very pronounced. This chain is Lantibiotic cinnamycin (cinA), found in Streptomyces griseoverticillatus (Streptoverticillium griseoverticillatum).